A 95-amino-acid chain; its full sequence is Small ribosomal subunit protein bS6 (95 aa).

The protein belongs to the bacterial ribosomal protein bS6 family.

Functionally, binds together with bS18 to 16S ribosomal RNA. The chain is Small ribosomal subunit protein bS6 from Clostridium perfringens (strain ATCC 13124 / DSM 756 / JCM 1290 / NCIMB 6125 / NCTC 8237 / Type A).